Here is a 71-residue protein sequence, read N- to C-terminus: UPF0346 protein SPP_0954 (71 aa).

Belongs to the UPF0346 family.

This chain is UPF0346 protein SPP_0954, found in Streptococcus pneumoniae (strain P1031).